The following is a 175-amino-acid chain: tRNA (cytidine(56)-2'-O)-methyltransferase (175 aa).

Leu82 is a binding site for S-adenosyl-L-methionine.

The protein belongs to the aTrm56 family. Homodimer.

The protein localises to the cytoplasm. It catalyses the reaction cytidine(56) in tRNA + S-adenosyl-L-methionine = 2'-O-methylcytidine(56) in tRNA + S-adenosyl-L-homocysteine + H(+). Functionally, specifically catalyzes the AdoMet-dependent 2'-O-ribose methylation of cytidine at position 56 in tRNAs. The chain is tRNA (cytidine(56)-2'-O)-methyltransferase from Cenarchaeum symbiosum (strain A).